Here is a 430-residue protein sequence, read N- to C-terminus: Trigger factor (430 aa).

Residues 163 to 248 enclose the PPIase FKBP-type domain; that stretch reads GNIAIIDFKG…IKDIKVKELP (86 aa).

It belongs to the FKBP-type PPIase family. Tig subfamily.

The protein localises to the cytoplasm. The catalysed reaction is [protein]-peptidylproline (omega=180) = [protein]-peptidylproline (omega=0). Involved in protein export. Acts as a chaperone by maintaining the newly synthesized protein in an open conformation. Functions as a peptidyl-prolyl cis-trans isomerase. This is Trigger factor from Clostridium botulinum (strain Loch Maree / Type A3).